The sequence spans 329 residues: Biotin synthase (329 aa).

The 225-residue stretch at 38 to 262 (NTIQVSTLLS…IMPHSYIRLS (225 aa)) folds into the Radical SAM core domain. [4Fe-4S] cluster-binding residues include C53, C57, and C60. 4 residues coordinate [2Fe-2S] cluster: C97, C128, C188, and R260.

Belongs to the radical SAM superfamily. Biotin synthase family. In terms of assembly, homodimer. [4Fe-4S] cluster serves as cofactor. It depends on [2Fe-2S] cluster as a cofactor.

It catalyses the reaction (4R,5S)-dethiobiotin + (sulfur carrier)-SH + 2 reduced [2Fe-2S]-[ferredoxin] + 2 S-adenosyl-L-methionine = (sulfur carrier)-H + biotin + 2 5'-deoxyadenosine + 2 L-methionine + 2 oxidized [2Fe-2S]-[ferredoxin]. The protein operates within cofactor biosynthesis; biotin biosynthesis; biotin from 7,8-diaminononanoate: step 2/2. Its function is as follows. Catalyzes the conversion of dethiobiotin (DTB) to biotin by the insertion of a sulfur atom into dethiobiotin via a radical-based mechanism. The sequence is that of Biotin synthase from Acinetobacter baumannii (strain SDF).